The chain runs to 682 residues: Nephrocystin-1-like protein (682 aa).

Residues 10 to 100 are a coiled coil; it reads LQDAINRFPQ…ALSPEKEQLS (91 aa). The interval 96–188 is disordered; sequence KEQLSFSVSV…PLESKTLNER (93 aa). Over residues 128 to 148 the composition is skewed to acidic residues; the sequence is NDDESEDSDNDSEIIETDVQL. The SH3 domain occupies 215–275; the sequence is VRGNVFVAID…PKTYLQHVKE (61 aa).

It belongs to the nephrocystin-1 family. Expressed in ciliated sensory neurons of the head (amphid neurons) and the tail in hermaphrodites (phasmid neurons) and males (sensory ray neurons).

Plays a role in the extension of dendrites from phasmid ciliated sensory neurons. May be necessary for initial assembly of the cilium. The sequence is that of Nephrocystin-1-like protein from Caenorhabditis elegans.